Here is a 160-residue protein sequence, read N- to C-terminus: Nucleotide-binding protein VFMJ11_1323 (160 aa).

This sequence belongs to the YajQ family.

In terms of biological role, nucleotide-binding protein. The chain is Nucleotide-binding protein VFMJ11_1323 from Aliivibrio fischeri (strain MJ11) (Vibrio fischeri).